We begin with the raw amino-acid sequence, 71 residues long: Lantibiotic Flvbeta.c (71 aa).

Residues 1-33 constitute a propeptide, cleaved by FlvT; sequence MENKFDMEKFKKLAAVVSEDELDTLLDETTVGA. Residues 35 to 39 constitute a cross-link (lanthionine (Ser-Cys); by FlvM2); the sequence is SSNDC. Ser-36 carries the 2,3-didehydroalanine (Ser); by FlvM2 modification. 3 consecutive cross-links (beta-methyllanthionine (Thr-Cys); by FlvM2) follow at residues 54 to 60, 62 to 65, and 66 to 69; these read TSKFDWC, TGAC, and TTSC.

In terms of processing, contains LL-lanthionine and DL-beta-methyllanthionine, when coepressed in E.coli with the flavecin synthetase FlvM2.

It is found in the secreted. Functionally, lanthionine-containing peptide antibiotic (lantibiotic) that is probably active on Gram-positive bacteria, since its analog [Del1]Flvbeta.c shows antibacterial activity against M.luteus. This activity is not synergistically enhanced by [Del2]Flvalpha.a, an analog of Flvalpha.a, which is encoded by the same operon than Flvbeta.c. The bactericidal activity of lantibiotics is based on depolarization of energized bacterial cytoplasmic membranes, initiated by the formation of aqueous transmembrane pores. The protein is Lantibiotic Flvbeta.c of Ruminococcus flavefaciens.